Here is a 199-residue protein sequence, read N- to C-terminus: DnaJ homolog subfamily C member 5B (199 aa).

2 positions are modified to phosphoserine: serine 14 and serine 16. The J domain occupies 19 to 84 (SLYEILGLHK…SKRNIYDKYG (66 aa)).

Interacts with the chaperone complex consisting of HSC70 and SGTA. In terms of processing, palmitoylated.

It localises to the membrane. The chain is DnaJ homolog subfamily C member 5B (Dnajc5b) from Mus musculus (Mouse).